A 256-amino-acid chain; its full sequence is Ribosomal RNA small subunit methyltransferase J (256 aa).

Residues 104–105, 120–121, 156–157, and D174 contribute to the S-adenosyl-L-methionine site; these read RD, ER, and SS.

The protein belongs to the methyltransferase superfamily. RsmJ family.

The protein resides in the cytoplasm. The enzyme catalyses guanosine(1516) in 16S rRNA + S-adenosyl-L-methionine = N(2)-methylguanosine(1516) in 16S rRNA + S-adenosyl-L-homocysteine + H(+). In terms of biological role, specifically methylates the guanosine in position 1516 of 16S rRNA. This Yersinia pseudotuberculosis serotype O:3 (strain YPIII) protein is Ribosomal RNA small subunit methyltransferase J.